The chain runs to 410 residues: Arginine biosynthesis bifunctional protein ArgJ (410 aa).

Substrate-binding residues include T158, K184, T195, E282, N405, and S410. T195 serves as the catalytic Nucleophile.

This sequence belongs to the ArgJ family. In terms of assembly, heterotetramer of two alpha and two beta chains.

It is found in the cytoplasm. It carries out the reaction N(2)-acetyl-L-ornithine + L-glutamate = N-acetyl-L-glutamate + L-ornithine. The enzyme catalyses L-glutamate + acetyl-CoA = N-acetyl-L-glutamate + CoA + H(+). It participates in amino-acid biosynthesis; L-arginine biosynthesis; L-ornithine and N-acetyl-L-glutamate from L-glutamate and N(2)-acetyl-L-ornithine (cyclic): step 1/1. The protein operates within amino-acid biosynthesis; L-arginine biosynthesis; N(2)-acetyl-L-ornithine from L-glutamate: step 1/4. Its function is as follows. Catalyzes two activities which are involved in the cyclic version of arginine biosynthesis: the synthesis of N-acetylglutamate from glutamate and acetyl-CoA as the acetyl donor, and of ornithine by transacetylation between N(2)-acetylornithine and glutamate. The sequence is that of Arginine biosynthesis bifunctional protein ArgJ from Bartonella henselae (strain ATCC 49882 / DSM 28221 / CCUG 30454 / Houston 1) (Rochalimaea henselae).